Consider the following 60-residue polypeptide: Large ribosomal subunit protein bL32 (60 aa).

Basic residues predominate over residues 1–16 (MAVPRRKTSPSRRGMR). A disordered region spans residues 1 to 60 (MAVPRRKTSPSRRGMRRSADAIKRPTYVEDKDSGELRRPHHLDLKTGMYKGRQVLKKKDS). A compositionally biased stretch (basic and acidic residues) spans 17–44 (RSADAIKRPTYVEDKDSGELRRPHHLDL).

This chain is Large ribosomal subunit protein bL32, found in Rhodopseudomonas palustris (strain ATCC BAA-98 / CGA009).